A 181-amino-acid polypeptide reads, in one-letter code: Acireductone dioxygenase (181 aa).

Residues H97, H99, E103, and H141 each contribute to the Fe(2+) site. 4 residues coordinate Ni(2+): H97, H99, E103, and H141.

It belongs to the acireductone dioxygenase (ARD) family. Monomer. It depends on Fe(2+) as a cofactor. The cofactor is Ni(2+).

It catalyses the reaction 1,2-dihydroxy-5-(methylsulfanyl)pent-1-en-3-one + O2 = 3-(methylsulfanyl)propanoate + CO + formate + 2 H(+). It carries out the reaction 1,2-dihydroxy-5-(methylsulfanyl)pent-1-en-3-one + O2 = 4-methylsulfanyl-2-oxobutanoate + formate + 2 H(+). Its pathway is amino-acid biosynthesis; L-methionine biosynthesis via salvage pathway; L-methionine from S-methyl-5-thio-alpha-D-ribose 1-phosphate: step 5/6. In terms of biological role, catalyzes 2 different reactions between oxygen and the acireductone 1,2-dihydroxy-3-keto-5-methylthiopentene (DHK-MTPene) depending upon the metal bound in the active site. Fe-containing acireductone dioxygenase (Fe-ARD) produces formate and 2-keto-4-methylthiobutyrate (KMTB), the alpha-ketoacid precursor of methionine in the methionine recycle pathway. Ni-containing acireductone dioxygenase (Ni-ARD) produces methylthiopropionate, carbon monoxide and formate, and does not lie on the methionine recycle pathway. In Pseudomonas savastanoi pv. phaseolicola (strain 1448A / Race 6) (Pseudomonas syringae pv. phaseolicola (strain 1448A / Race 6)), this protein is Acireductone dioxygenase.